Reading from the N-terminus, the 58-residue chain is Large ribosomal subunit protein bL32 (58 aa).

The tract at residues 1–24 (MAVPKKKTSKSKRDKRKATWKRKA) is disordered.

It belongs to the bacterial ribosomal protein bL32 family.

The polypeptide is Large ribosomal subunit protein bL32 (Synechococcus sp. (strain ATCC 27144 / PCC 6301 / SAUG 1402/1) (Anacystis nidulans)).